The sequence spans 128 residues: MTQTLIPLNFLAVAIGAALGACARWLAGLWLNSSAWPWGTLLVNLAGGYLIGLALAVLLAHPEWPQWIRLAAVTGFLGGLTTFSTFSAETVGMLERGAYATALGYAALSLVGSLALTALGLASAHALR.

4 consecutive transmembrane segments (helical) span residues 10-30 (FLAVAIGAALGACARWLAGLW), 40-60 (TLLVNLAGGYLIGLALAVLLA), 71-91 (AAVTGFLGGLTTFSTFSAETV), and 102-122 (ALGYAALSLVGSLALTALGLA). Positions 78 and 81 each coordinate Na(+).

It belongs to the fluoride channel Fluc/FEX (TC 1.A.43) family.

The protein resides in the cell inner membrane. It carries out the reaction fluoride(in) = fluoride(out). Na(+) is not transported, but it plays an essential structural role and its presence is essential for fluoride channel function. Its function is as follows. Fluoride-specific ion channel. Important for reducing fluoride concentration in the cell, thus reducing its toxicity. The protein is Fluoride-specific ion channel FluC of Bordetella petrii (strain ATCC BAA-461 / DSM 12804 / CCUG 43448).